The chain runs to 44 residues: NSCDCDIEWSSCSAYGFDHDEDYGFNEDTDRIIINTKAILLPTK.

The polypeptide is Unknown protein 1 (Lonomia obliqua (Moth)).